Here is a 232-residue protein sequence, read N- to C-terminus: Large ribosomal subunit protein uL1 (232 aa).

The protein belongs to the universal ribosomal protein uL1 family. Part of the 50S ribosomal subunit.

Functionally, binds directly to 23S rRNA. The L1 stalk is quite mobile in the ribosome, and is involved in E site tRNA release. In terms of biological role, protein L1 is also a translational repressor protein, it controls the translation of the L11 operon by binding to its mRNA. This is Large ribosomal subunit protein uL1 from Bordetella petrii (strain ATCC BAA-461 / DSM 12804 / CCUG 43448).